The following is a 152-amino-acid chain: HTH-type transcriptional regulator SlrR (152 aa).

Positions 6-61 (IRLYRKRKGYSINQLAVESGVSKSYLSKIERGVHTNPSVQFLKKVSATLEVELTEL) constitute an HTH cro/C1-type domain. The segment at residues 17-36 (INQLAVESGVSKSYLSKIER) is a DNA-binding region (H-T-H motif). The Sin domain maps to 113–151 (YRNRKLTESNIEEWKALMAEAREIGLSVHEVKSFLKTKG).

Component of the SlrR/SlrA complex.

Its function is as follows. Represses sigma(D)-dependent flagellar genes and activate the eps and yqxM operons. Repressor activity is regulated by SlrA. Controls the initiation of biofilm formation. This Bacillus subtilis (strain 168) protein is HTH-type transcriptional regulator SlrR (slrR).